The following is a 94-amino-acid chain: Pyrimidine/purine nucleoside phosphorylase (94 aa).

The protein belongs to the nucleoside phosphorylase PpnP family.

The catalysed reaction is a purine D-ribonucleoside + phosphate = a purine nucleobase + alpha-D-ribose 1-phosphate. The enzyme catalyses adenosine + phosphate = alpha-D-ribose 1-phosphate + adenine. It carries out the reaction cytidine + phosphate = cytosine + alpha-D-ribose 1-phosphate. It catalyses the reaction guanosine + phosphate = alpha-D-ribose 1-phosphate + guanine. The catalysed reaction is inosine + phosphate = alpha-D-ribose 1-phosphate + hypoxanthine. The enzyme catalyses thymidine + phosphate = 2-deoxy-alpha-D-ribose 1-phosphate + thymine. It carries out the reaction uridine + phosphate = alpha-D-ribose 1-phosphate + uracil. It catalyses the reaction xanthosine + phosphate = alpha-D-ribose 1-phosphate + xanthine. Its function is as follows. Catalyzes the phosphorolysis of diverse nucleosides, yielding D-ribose 1-phosphate and the respective free bases. Can use uridine, adenosine, guanosine, cytidine, thymidine, inosine and xanthosine as substrates. Also catalyzes the reverse reactions. The chain is Pyrimidine/purine nucleoside phosphorylase from Escherichia fergusonii (strain ATCC 35469 / DSM 13698 / CCUG 18766 / IAM 14443 / JCM 21226 / LMG 7866 / NBRC 102419 / NCTC 12128 / CDC 0568-73).